Here is a 146-residue protein sequence, read N- to C-terminus: ATP synthase epsilon chain (146 aa).

It belongs to the ATPase epsilon chain family. As to quaternary structure, F-type ATPases have 2 components, CF(1) - the catalytic core - and CF(0) - the membrane proton channel. CF(1) has five subunits: alpha(3), beta(3), gamma(1), delta(1), epsilon(1). CF(0) has three main subunits: a, b and c.

The protein resides in the cell membrane. Produces ATP from ADP in the presence of a proton gradient across the membrane. The sequence is that of ATP synthase epsilon chain from Lactobacillus delbrueckii subsp. bulgaricus (strain ATCC 11842 / DSM 20081 / BCRC 10696 / JCM 1002 / NBRC 13953 / NCIMB 11778 / NCTC 12712 / WDCM 00102 / Lb 14).